A 302-amino-acid polypeptide reads, in one-letter code: MFRKQNLKWLGVLATIIMTFVQLGGALVTKTGSEDGCGSSWPLCNGALLPENLPIQTIIELSHRAVSAISLIVVLWLVITAWKNIGYIKEIKPLSIISVGFLLVQALVGAAAVIWQQNPYVLALHFGISLISFSSVFLMTLIIFSIDKKYEADILFIHKPLRILTWLMAIIVYLTIYTGALVRHTKSSLAYGAWPIPFDDIVPHNAHDWVQFSHRGMAFITFIWIMITFIHAIKNYSDNRTVRYGYTASFILVILQVITGALSVITNVNLIIALFHALFITYLFGMIAYFILLMLRTTRSLK.

Residues 1 to 8 (MFRKQNLK) are Cytoplasmic-facing. The helical transmembrane segment at 9 to 29 (WLGVLATIIMTFVQLGGALVT) threads the bilayer. The Extracellular portion of the chain corresponds to 30–67 (KTGSEDGCGSSWPLCNGALLPENLPIQTIIELSHRAVS). Cys37 and Cys44 are disulfide-bonded. The active site involves Glu60. His63 provides a ligand contact to heme o. Residues 68 to 88 (AISLIVVLWLVITAWKNIGYI) form a helical membrane-spanning segment. Residues 89 to 93 (KEIKP) lie on the Cytoplasmic side of the membrane. The chain crosses the membrane as a helical span at residues 94–114 (LSIISVGFLLVQALVGAAAVI). At 115 to 125 (WQQNPYVLALH) the chain is on the extracellular side. His125 serves as a coordination point for heme o. A helical transmembrane segment spans residues 126 to 146 (FGISLISFSSVFLMTLIIFSI). Over 147–161 (DKKYEADILFIHKPL) the chain is Cytoplasmic. A helical membrane pass occupies residues 162-182 (RILTWLMAIIVYLTIYTGALV). Residues 183–215 (RHTKSSLAYGAWPIPFDDIVPHNAHDWVQFSHR) lie on the Extracellular side of the membrane. Position 214 (His214) interacts with heme b. A helical transmembrane segment spans residues 216–236 (GMAFITFIWIMITFIHAIKNY). Residues 237-244 (SDNRTVRY) lie on the Cytoplasmic side of the membrane. The chain crosses the membrane as a helical span at residues 245–265 (GYTASFILVILQVITGALSVI). Topologically, residues 266 to 270 (TNVNL) are extracellular. A helical transmembrane segment spans residues 271–291 (IIALFHALFITYLFGMIAYFI). His276 provides a ligand contact to heme b. Residues 292-302 (LLMLRTTRSLK) lie on the Cytoplasmic side of the membrane.

It belongs to the COX15/CtaA family. Type 1 subfamily. As to quaternary structure, interacts with CtaB. It depends on heme b as a cofactor.

The protein localises to the cell membrane. The enzyme catalyses Fe(II)-heme o + 2 A + H2O = Fe(II)-heme a + 2 AH2. It participates in porphyrin-containing compound metabolism; heme A biosynthesis; heme A from heme O: step 1/1. In terms of biological role, catalyzes the conversion of heme O to heme A by two successive hydroxylations of the methyl group at C8. The first hydroxylation forms heme I, the second hydroxylation results in an unstable dihydroxymethyl group, which spontaneously dehydrates, resulting in the formyl group of heme A. In Staphylococcus epidermidis (strain ATCC 12228 / FDA PCI 1200), this protein is Heme A synthase.